We begin with the raw amino-acid sequence, 39 residues long: Contryphan-Cal4 (39 aa).

The N-terminal stretch at Met1–Ser20 is a signal peptide. The cysteines at positions 29 and 35 are disulfide-linked.

As to expression, expressed by the venom duct.

The protein resides in the secreted. Probable neurotoxin. This chain is Contryphan-Cal4, found in Californiconus californicus (California cone).